Here is a 178-residue protein sequence, read N- to C-terminus: Large ribosomal subunit protein bL25 (178 aa).

It belongs to the bacterial ribosomal protein bL25 family. CTC subfamily. In terms of assembly, part of the 50S ribosomal subunit; part of the 5S rRNA/L5/L18/L25 subcomplex. Contacts the 5S rRNA. Binds to the 5S rRNA independently of L5 and L18.

In terms of biological role, this is one of the proteins that binds to the 5S RNA in the ribosome where it forms part of the central protuberance. The sequence is that of Large ribosomal subunit protein bL25 from Wolinella succinogenes (strain ATCC 29543 / DSM 1740 / CCUG 13145 / JCM 31913 / LMG 7466 / NCTC 11488 / FDC 602W) (Vibrio succinogenes).